The sequence spans 189 residues: MPTPTKGPRLGGGPAHERLMLANLAAALFEHKRITTTVTKAKRLKPYAERLVTFAKRGDLASRRRVLGLISDKGVVHELFTDIAGAVANRDGGYTRITKIGNRKGDNAPMAVIELVLEPVSPKQAVVAEATAAASKAAPAAEEEVVETEEAPAVEAEAAESEEAPAAEAEAAEAEAAETEEAPAAEDKK.

The segment at 136–189 (KAAPAAEEEVVETEEAPAVEAEAAESEEAPAAEAEAAEAEAAETEEAPAAEDKK) is disordered. The segment covering 141 to 189 (AEEEVVETEEAPAVEAEAAESEEAPAAEAEAAEAEAAETEEAPAAEDKK) has biased composition (acidic residues).

Belongs to the bacterial ribosomal protein bL17 family. In terms of assembly, part of the 50S ribosomal subunit. Contacts protein L32.

In Paenarthrobacter aurescens (strain TC1), this protein is Large ribosomal subunit protein bL17.